A 115-amino-acid chain; its full sequence is Phosphoribosyl-AMP cyclohydrolase (115 aa).

Asp80 is a binding site for Mg(2+). Cys81 serves as a coordination point for Zn(2+). Mg(2+) contacts are provided by Asp82 and Asp84. Residues Cys97 and Cys104 each contribute to the Zn(2+) site.

The protein belongs to the PRA-CH family. As to quaternary structure, homodimer. Requires Mg(2+) as cofactor. Zn(2+) is required as a cofactor.

The protein resides in the cytoplasm. It catalyses the reaction 1-(5-phospho-beta-D-ribosyl)-5'-AMP + H2O = 1-(5-phospho-beta-D-ribosyl)-5-[(5-phospho-beta-D-ribosylamino)methylideneamino]imidazole-4-carboxamide. The protein operates within amino-acid biosynthesis; L-histidine biosynthesis; L-histidine from 5-phospho-alpha-D-ribose 1-diphosphate: step 3/9. Catalyzes the hydrolysis of the adenine ring of phosphoribosyl-AMP. This chain is Phosphoribosyl-AMP cyclohydrolase, found in Mycobacterium bovis (strain ATCC BAA-935 / AF2122/97).